Reading from the N-terminus, the 873-residue chain is Protein translocase subunit SecA (873 aa).

ATP contacts are provided by residues Gln-88, 106 to 110 (GEGKT), and Asp-501. Residues Cys-856, Cys-858, Cys-867, and His-868 each coordinate Zn(2+).

It belongs to the SecA family. In terms of assembly, monomer and homodimer. Part of the essential Sec protein translocation apparatus which comprises SecA, SecYEG and auxiliary proteins SecDF-YajC and YidC. The cofactor is Zn(2+).

Its subcellular location is the cell inner membrane. It is found in the cytoplasm. The enzyme catalyses ATP + H2O + cellular proteinSide 1 = ADP + phosphate + cellular proteinSide 2.. Part of the Sec protein translocase complex. Interacts with the SecYEG preprotein conducting channel. Has a central role in coupling the hydrolysis of ATP to the transfer of proteins into and across the cell membrane, serving both as a receptor for the preprotein-SecB complex and as an ATP-driven molecular motor driving the stepwise translocation of polypeptide chains across the membrane. This is Protein translocase subunit SecA from Anaplasma phagocytophilum (strain HZ).